Consider the following 111-residue polypeptide: PHD finger-like domain-containing protein 5A (111 aa).

The protein belongs to the PHF5 family.

This Drosophila melanogaster (Fruit fly) protein is PHD finger-like domain-containing protein 5A.